Here is a 117-residue protein sequence, read N- to C-terminus: Large ribosomal subunit protein bL19 (117 aa).

Belongs to the bacterial ribosomal protein bL19 family.

Functionally, this protein is located at the 30S-50S ribosomal subunit interface and may play a role in the structure and function of the aminoacyl-tRNA binding site. In Shewanella piezotolerans (strain WP3 / JCM 13877), this protein is Large ribosomal subunit protein bL19.